Consider the following 696-residue polypeptide: Spindle assembly checkpoint component MAD1 (696 aa).

Disordered stretches follow at residues M1–N22 and Q394–K415. Basic and acidic residues predominate over residues K402–E413.

This sequence belongs to the MAD1 family. Component of the mitotic checkpoint complex (MCC).

Its subcellular location is the nucleus. In terms of biological role, central component of the spindle assembly checkpoint which is a feedback control that prevents cells with incompletely assembled spindles from leaving mitosis. This Candida albicans (strain SC5314 / ATCC MYA-2876) (Yeast) protein is Spindle assembly checkpoint component MAD1.